The primary structure comprises 341 residues: Phosphoribosylformylglycinamidine cyclo-ligase (341 aa).

The protein belongs to the AIR synthase family.

The protein resides in the cytoplasm. The enzyme catalyses 2-formamido-N(1)-(5-O-phospho-beta-D-ribosyl)acetamidine + ATP = 5-amino-1-(5-phospho-beta-D-ribosyl)imidazole + ADP + phosphate + H(+). It participates in purine metabolism; IMP biosynthesis via de novo pathway; 5-amino-1-(5-phospho-D-ribosyl)imidazole from N(2)-formyl-N(1)-(5-phospho-D-ribosyl)glycinamide: step 2/2. The protein is Phosphoribosylformylglycinamidine cyclo-ligase of Thermosynechococcus vestitus (strain NIES-2133 / IAM M-273 / BP-1).